The primary structure comprises 661 residues: Arginine--tRNA ligase, cytoplasmic (661 aa).

Residues 1–72 (MEARVAEAAA…QEEQSKTVKS (72 aa)) form a could be involved in the assembly of the multisynthetase complex region. Residues 201-203 (SPN), histidine 212, tyrosine 385, aspartate 389, and glutamine 413 each bind L-arginine. Residues 202-213 (PNIAKEMHVGHL) carry the 'HIGH' region motif. The interval 530-544 (NTAAYLLYAFTRIRA) is interaction with tRNA.

This sequence belongs to the class-I aminoacyl-tRNA synthetase family. As to quaternary structure, monomer; also part of a multisubunit complex that groups tRNA ligases for Arg, Asp, Glu, Gln, Ile, Leu, Lys, Met and Pro.

It localises to the cytoplasm. Its subcellular location is the cytosol. The enzyme catalyses tRNA(Arg) + L-arginine + ATP = L-arginyl-tRNA(Arg) + AMP + diphosphate. Functionally, forms part of a macromolecular complex that catalyzes the attachment of specific amino acids to cognate tRNAs during protein synthesis. The sequence is that of Arginine--tRNA ligase, cytoplasmic (RARS1) from Gallus gallus (Chicken).